A 187-amino-acid chain; its full sequence is Protein SCM4 (187 aa).

Transmembrane regions (helical) follow at residues 11–31, 45–65, and 80–100; these read IAVS…VISI, VLCT…GAFG, and LLCG…VSLF. The segment covering 114–134 has biased composition (basic and acidic residues); sequence DLEKQKDEKLPQHHPEVKDGE. Residues 114–135 are disordered; sequence DLEKQKDEKLPQHHPEVKDGEA. A helical membrane pass occupies residues 162-182; that stretch reads MSLHMSIVTGITIFTFGKCIL.

It belongs to the ATG33 family.

It localises to the membrane. This is Protein SCM4 (SCM4) from Saccharomyces cerevisiae (strain ATCC 204508 / S288c) (Baker's yeast).